A 335-amino-acid chain; its full sequence is Probable E3 ubiquitin-protein ligase BAH1-like (335 aa).

The SPX domain maps to 1-163 (MKFGETFTEY…SSENGKNFKL (163 aa)). The RING-type zinc-finger motif lies at 231–280 (CAICLETVFNPYALKCGHIFCNSCACSAASVLIFQGIKAAPRHSKCPICR).

The protein belongs to the RING-type zinc finger family.

It catalyses the reaction S-ubiquitinyl-[E2 ubiquitin-conjugating enzyme]-L-cysteine + [acceptor protein]-L-lysine = [E2 ubiquitin-conjugating enzyme]-L-cysteine + N(6)-ubiquitinyl-[acceptor protein]-L-lysine.. The protein operates within protein modification; protein ubiquitination. The polypeptide is Probable E3 ubiquitin-protein ligase BAH1-like (RF178) (Arabidopsis thaliana (Mouse-ear cress)).